The primary structure comprises 488 residues: Inosine-5'-monophosphate dehydrogenase (488 aa).

2 CBS domains span residues 95–153 (VITN…SIKI) and 157–213 (MTKE…PHAA). NAD(+) contacts are provided by residues aspartate 250 and 300-302 (GIG). K(+)-binding residues include glycine 302 and glycine 304. Serine 305 contacts IMP. K(+) is bound at residue cysteine 307. Cysteine 307 functions as the Thioimidate intermediate in the catalytic mechanism. IMP is bound by residues 340 to 342 (DGG), 363 to 364 (GS), and 387 to 391 (YRGMG). The Proton acceptor role is filled by arginine 403. Glutamate 417 provides a ligand contact to IMP. Residues 467–488 (AGLAESHPHNVQITKESPNYSF) form a disordered region. Residues glutamate 471, serine 472, and histidine 473 each contribute to the K(+) site. The span at 475 to 488 (HNVQITKESPNYSF) shows a compositional bias: polar residues.

This sequence belongs to the IMPDH/GMPR family. Homotetramer. Requires K(+) as cofactor.

The catalysed reaction is IMP + NAD(+) + H2O = XMP + NADH + H(+). It participates in purine metabolism; XMP biosynthesis via de novo pathway; XMP from IMP: step 1/1. With respect to regulation, mycophenolic acid (MPA) is a non-competitive inhibitor that prevents formation of the closed enzyme conformation by binding to the same site as the amobile flap. In contrast, mizoribine monophosphate (MZP) is a competitive inhibitor that induces the closed conformation. MPA is a potent inhibitor of mammalian IMPDHs but a poor inhibitor of the bacterial enzymes. MZP is a more potent inhibitor of bacterial IMPDH. In terms of biological role, catalyzes the conversion of inosine 5'-phosphate (IMP) to xanthosine 5'-phosphate (XMP), the first committed and rate-limiting step in the de novo synthesis of guanine nucleotides, and therefore plays an important role in the regulation of cell growth. This Staphylococcus haemolyticus (strain JCSC1435) protein is Inosine-5'-monophosphate dehydrogenase.